A 217-amino-acid polypeptide reads, in one-letter code: 3,4-dihydroxy-2-butanone 4-phosphate synthase (217 aa).

D-ribulose 5-phosphate-binding positions include 37–38, Asp42, 150–154, and Glu174; these read RE and RRGHT. Glu38 is a binding site for Mg(2+). His153 serves as a coordination point for Mg(2+).

Belongs to the DHBP synthase family. As to quaternary structure, homodimer. Requires Mg(2+) as cofactor. The cofactor is Mn(2+).

The catalysed reaction is D-ribulose 5-phosphate = (2S)-2-hydroxy-3-oxobutyl phosphate + formate + H(+). It participates in cofactor biosynthesis; riboflavin biosynthesis; 2-hydroxy-3-oxobutyl phosphate from D-ribulose 5-phosphate: step 1/1. Functionally, catalyzes the conversion of D-ribulose 5-phosphate to formate and 3,4-dihydroxy-2-butanone 4-phosphate. This is 3,4-dihydroxy-2-butanone 4-phosphate synthase from Serratia proteamaculans (strain 568).